We begin with the raw amino-acid sequence, 192 residues long: Large ribosomal subunit protein uL5 (192 aa).

This sequence belongs to the universal ribosomal protein uL5 family. Part of the 50S ribosomal subunit; part of the 5S rRNA/L5/L18/L25 subcomplex. Contacts the 5S rRNA and the P site tRNA. Forms a bridge to the 30S subunit in the 70S ribosome.

Its function is as follows. This is one of the proteins that bind and probably mediate the attachment of the 5S RNA into the large ribosomal subunit, where it forms part of the central protuberance. In the 70S ribosome it contacts protein S13 of the 30S subunit (bridge B1b), connecting the 2 subunits; this bridge is implicated in subunit movement. Contacts the P site tRNA; the 5S rRNA and some of its associated proteins might help stabilize positioning of ribosome-bound tRNAs. The polypeptide is Large ribosomal subunit protein uL5 (Paenarthrobacter aurescens (strain TC1)).